A 164-amino-acid chain; its full sequence is MDKVIYPGTFDPITHGHEDLVYRASRLFGKVIVAVAVSSGKAPFFSLEERVKMARNVLTGYSNVEVTGFSGLLMEFARQQDAHIIIRGLRAVSDFEYEFQLAGMNRGLYPDVETIFLTPSEQYMFISATIVREIARLGGDVSKFVHPLVIERLRQKKIEMNNGE.

T9 contributes to the substrate binding site. Residues T9 to F10 and H17 each bind ATP. The substrate site is built by K41, L73, and R87. Residues G88 to R90, E98, and Y123 to T129 contribute to the ATP site.

The protein belongs to the bacterial CoaD family. In terms of assembly, homohexamer. Requires Mg(2+) as cofactor.

Its subcellular location is the cytoplasm. It carries out the reaction (R)-4'-phosphopantetheine + ATP + H(+) = 3'-dephospho-CoA + diphosphate. The protein operates within cofactor biosynthesis; coenzyme A biosynthesis; CoA from (R)-pantothenate: step 4/5. Functionally, reversibly transfers an adenylyl group from ATP to 4'-phosphopantetheine, yielding dephospho-CoA (dPCoA) and pyrophosphate. This chain is Phosphopantetheine adenylyltransferase, found in Nitrosomonas eutropha (strain DSM 101675 / C91 / Nm57).